Reading from the N-terminus, the 912-residue chain is Tiger protein E1 (912 aa).

Positions Met1–Ser22 are cleaved as a signal peptide. Residues Asp23–Pro815 are Extracellular-facing. Residues Asn54, Asn108, Asn164, Asn183, Asn232, Asn268, Asn323, Asn356, Asn398, Asn407, Asn568, Asn637, Asn653, Asn658, Asn706, Asn716, Asn763, Asn774, Asn781, and Asn809 are each glycosylated (N-linked (GlcNAc...) asparagine). 2 IPT/TIG domains span residues Ser532–Thr609 and Pro612–Ile686. One can recognise an IPT/TIG 3 domain in the interval Thr715–Phe796. A helical membrane pass occupies residues Asn816–Ile836. Residues Lys837 to Asp912 lie on the Cytoplasmic side of the membrane.

The protein localises to the cell membrane. The sequence is that of Tiger protein E1 (tgrE1) from Dictyostelium discoideum (Social amoeba).